Reading from the N-terminus, the 370-residue chain is Maturase K (370 aa).

Belongs to the intron maturase 2 family. MatK subfamily.

Its subcellular location is the plastid. The protein localises to the chloroplast. Usually encoded in the trnK tRNA gene intron. Probably assists in splicing its own and other chloroplast group II introns. This chain is Maturase K, found in Marchantia polymorpha (Common liverwort).